Here is a 113-residue protein sequence, read N- to C-terminus: Ferredoxin-1 (113 aa).

2 consecutive 4Fe-4S ferredoxin-type domains span residues 2–30 (TYIVTDACVRCKFMDCVEVCPVDCFYEGE) and 31–60 (NFLVINPDECIDCGVCEPECPVDAIKPDTE). C9 and C17 together coordinate [3Fe-4S] cluster. Residues C21, C40, C43, and C46 each coordinate [4Fe-4S] cluster. C50 contributes to the [3Fe-4S] cluster binding site.

[4Fe-4S] cluster is required as a cofactor. It depends on [3Fe-4S] cluster as a cofactor.

This chain is Ferredoxin-1 (fdxA), found in Caulobacter vibrioides (strain ATCC 19089 / CIP 103742 / CB 15) (Caulobacter crescentus).